A 358-amino-acid chain; its full sequence is Membrane-bound lytic murein transglycosylase C (358 aa).

An N-terminal signal peptide occupies residues 1 to 16 (MKKILALLVIAPLLVS). Cys-17 carries the N-palmitoyl cysteine lipid modification. The S-diacylglycerol cysteine moiety is linked to residue Cys-17.

It belongs to the transglycosylase Slt family.

It localises to the cell outer membrane. It catalyses the reaction Exolytic cleavage of the (1-&gt;4)-beta-glycosidic linkage between N-acetylmuramic acid (MurNAc) and N-acetylglucosamine (GlcNAc) residues in peptidoglycan, from either the reducing or the non-reducing ends of the peptidoglycan chains, with concomitant formation of a 1,6-anhydrobond in the MurNAc residue.. In terms of biological role, murein-degrading enzyme. May play a role in recycling of muropeptides during cell elongation and/or cell division. This chain is Membrane-bound lytic murein transglycosylase C, found in Yersinia pseudotuberculosis serotype O:1b (strain IP 31758).